Consider the following 435-residue polypeptide: Serine--tRNA ligase (435 aa).

L-serine is bound at residue 233-235 (TAE). 264-266 (RAE) lines the ATP pocket. An L-serine-binding site is contributed by E287. ATP is bound at residue 351-354 (EISS). Position 386 (S386) interacts with L-serine.

Belongs to the class-II aminoacyl-tRNA synthetase family. Type-1 seryl-tRNA synthetase subfamily. As to quaternary structure, homodimer. The tRNA molecule binds across the dimer.

It is found in the cytoplasm. The catalysed reaction is tRNA(Ser) + L-serine + ATP = L-seryl-tRNA(Ser) + AMP + diphosphate + H(+). It catalyses the reaction tRNA(Sec) + L-serine + ATP = L-seryl-tRNA(Sec) + AMP + diphosphate + H(+). It functions in the pathway aminoacyl-tRNA biosynthesis; selenocysteinyl-tRNA(Sec) biosynthesis; L-seryl-tRNA(Sec) from L-serine and tRNA(Sec): step 1/1. Functionally, catalyzes the attachment of serine to tRNA(Ser). Is also able to aminoacylate tRNA(Sec) with serine, to form the misacylated tRNA L-seryl-tRNA(Sec), which will be further converted into selenocysteinyl-tRNA(Sec). This Anaeromyxobacter dehalogenans (strain 2CP-C) protein is Serine--tRNA ligase.